The primary structure comprises 1976 residues: Protein TIC 214 (1976 aa).

Transmembrane regions (helical) follow at residues Leu-11–Phe-31, Phe-64–Leu-84, Pro-87–Asn-107, Leu-126–Leu-146, Phe-173–Trp-193, and Ile-221–Ile-241. Acidic residues predominate over residues Phe-619–Thr-635. 2 disordered regions span residues Phe-619–Ser-642 and Ser-830–Arg-861. The segment covering Gly-836–Arg-861 has biased composition (basic and acidic residues). Helical transmembrane passes span Ile-1054 to Leu-1074 and Ile-1202 to Leu-1222. Positions Gln-1633–His-1665 are enriched in basic and acidic residues. The interval Gln-1633–Leu-1669 is disordered.

The protein belongs to the TIC214 family. In terms of assembly, part of the Tic complex.

It is found in the plastid. The protein resides in the chloroplast inner membrane. Involved in protein precursor import into chloroplasts. May be part of an intermediate translocation complex acting as a protein-conducting channel at the inner envelope. In Nymphaea alba (White water-lily), this protein is Protein TIC 214.